The chain runs to 51 residues: Large ribosomal subunit protein bL33 (51 aa).

It belongs to the bacterial ribosomal protein bL33 family.

The sequence is that of Large ribosomal subunit protein bL33 from Methylococcus capsulatus (strain ATCC 33009 / NCIMB 11132 / Bath).